We begin with the raw amino-acid sequence, 88 residues long: UPF0335 protein NGR_c28390 (88 aa).

This sequence belongs to the UPF0335 family.

The chain is UPF0335 protein NGR_c28390 from Sinorhizobium fredii (strain NBRC 101917 / NGR234).